A 631-amino-acid polypeptide reads, in one-letter code: Probable potassium transport system protein Kup (631 aa).

12 consecutive transmembrane segments (helical) span residues 17–37 (IGLL…SPLY), 56–76 (ILGV…FKYM), 109–129 (MMMV…SMIT), 147–167 (GLDH…FLIQ), 174–194 (IGVL…ALGV), 215–235 (FFII…LALT), 256–276 (WFIL…ALVL), 288–308 (LLAP…ATII), 346–366 (IYIG…VIGF), 378–398 (VAVT…MLML), 403–423 (PLLA…FFAA), and 428–448 (IFQG…LMTT).

Belongs to the HAK/KUP transporter (TC 2.A.72) family.

It localises to the cell inner membrane. It carries out the reaction K(+)(in) + H(+)(in) = K(+)(out) + H(+)(out). In terms of biological role, transport of potassium into the cell. Likely operates as a K(+):H(+) symporter. The sequence is that of Probable potassium transport system protein Kup from Pseudomonas savastanoi pv. phaseolicola (strain 1448A / Race 6) (Pseudomonas syringae pv. phaseolicola (strain 1448A / Race 6)).